The following is an 85-amino-acid chain: Alpha-toxin Amm8 (85 aa).

The N-terminal stretch at 1-19 (MNYLVMISLALLFMTGVES) is a signal peptide. The LCN-type CS-alpha/beta domain maps to 21-83 (KDGYIVNDIN…VRTKGPGRCN (63 aa)). Intrachain disulfides connect C31–C82, C35–C55, C41–C65, and C45–C67. Position 85 (R85) is a propeptide, removed by a carboxypeptidase.

The protein belongs to the long (4 C-C) scorpion toxin superfamily. Sodium channel inhibitor family. Alpha subfamily. As to expression, expressed by the venom gland.

It localises to the secreted. Alpha toxins bind voltage-independently at site-3 of sodium channels (Nav) and inhibit the inactivation of the activated channels, thereby blocking neuronal transmission. The toxin principally slows the inactivation process of TTX-sensitive sodium channels. It discriminates neuronal versus muscular sodium channel, as it is more potent on rat brain Nav1.2/SCN2A (EC(50)=29 nM) than on rat skeletal muscle Nav1.4/SCN4A (EC(50)=416 nM). It also shows a weak activity on Nav1.7/SCN9A (EC(50)=1.76 uM). In vivo, the toxin produces pain hypersensibility to mechanical and thermal stimuli. It also exhibits potent analgesic activity (when injected intraperitoneally), increasing hot plate and tail flick withdrawal latencies in a dose-dependent fashion. This paradoxical analgesic action, is significantly suppressed by opioid receptor antagonists, suggesting a pain-induced analgesia mechanism that involves an endogenous opioid system. This led to hypothesis that pain relief induced by peripheral administration of Amm VIII may result from sensitization of primary afferent neurons and subsequent activation of an opioid-dependent noxious inhibitory control. This is Alpha-toxin Amm8 from Androctonus mauritanicus mauritanicus (Scorpion).